The sequence spans 1755 residues: Transposon Ty1-BL Gag-Pol polyprotein (1755 aa).

3 stretches are compositionally biased toward polar residues: residues 20-31 (SVTSKEVQTTQD), 46-55 (VSTQANSQQP), and 137-168 (VGTH…TNQH). Disordered stretches follow at residues 20-84 (SVTS…QNGP), 137-173 (VGTH…RPPP), and 350-420 (QQES…IRGS). The segment at 299–401 (NNGIPINNKV…NSQSRTARAH (103 aa)) is RNA-binding. Basic and acidic residues predominate over residues 363–372 (SPSDEKKDSR). Positions 373–411 (TYTNTTKPKSITRNSQKPNNSQSRTARAHNVSTFNNSPG) are enriched in polar residues. The For protease activity; shared with dimeric partner role is filled by aspartate 461. Positions 583–640 (NVHTSESTRKYPYPFIHRMLAHANAQTIRYSLKNNTITYFNESDVDWSSAIDYQCPDC) are integrase-type zinc finger-like. Positions 660-835 (NSYEPFQYLH…AGLDISTLLP (176 aa)) constitute an Integrase catalytic domain. Aspartate 671 and aspartate 736 together coordinate Mg(2+). The disordered stretch occupies residues 956–1172 (SKAVSPTDST…LGGIGDSNAY (217 aa)). The segment covering 960 to 969 (SPTDSTPPST) has biased composition (low complexity). 2 stretches are compositionally biased toward polar residues: residues 1005-1017 (STPQ…STDS) and 1031-1043 (MSQS…SYAS). Residues 1044 to 1053 (KSKDFRHSDS) are compositionally biased toward basic and acidic residues. Composition is skewed to polar residues over residues 1054–1082 (YSDN…QTSE) and 1095–1106 (SIDTSSSESNSL). Residues 1178–1212 (KKRSLEDNETEIKVSRDTWNTKNMRSLEPPRSKKR) carry the Bipartite nuclear localization signal motif. The Reverse transcriptase Ty1/copia-type domain occupies 1338-1476 (NNYHITQLDI…DILGLEIKYQ (139 aa)). Mg(2+) is bound by residues aspartate 1346, aspartate 1427, aspartate 1428, aspartate 1610, glutamate 1652, and aspartate 1685. One can recognise an RNase H Ty1/copia-type domain in the interval 1610 to 1752 (DASYGNQPYY…IKTFKLLTNK (143 aa)).

The capsid protein forms a homotrimer, from which the VLPs are assembled. The protease is a homodimer, whose active site consists of two apposed aspartic acid residues. Initially, virus-like particles (VLPs) are composed of the structural unprocessed proteins Gag and Gag-Pol, and also contain the host initiator methionine tRNA (tRNA(i)-Met) which serves as a primer for minus-strand DNA synthesis, and a dimer of genomic Ty RNA. Processing of the polyproteins occurs within the particle and proceeds by an ordered pathway, called maturation. First, the protease (PR) is released by autocatalytic cleavage of the Gag-Pol polyprotein yielding capsid protein p45 and a Pol-p154 precursor protein. This cleavage is a prerequisite for subsequent processing of Pol-p154 at the remaining sites to release the mature structural and catalytic proteins. Maturation takes place prior to the RT reaction and is required to produce transposition-competent VLPs.

The protein resides in the cytoplasm. It localises to the nucleus. It carries out the reaction DNA(n) + a 2'-deoxyribonucleoside 5'-triphosphate = DNA(n+1) + diphosphate. The catalysed reaction is Endonucleolytic cleavage to 5'-phosphomonoester.. Its function is as follows. Capsid protein (CA) is the structural component of the virus-like particle (VLP), forming the shell that encapsulates the retrotransposons dimeric RNA genome. The particles are assembled from trimer-clustered units and there are holes in the capsid shells that allow for the diffusion of macromolecules. CA also has nucleocapsid-like chaperone activity, promoting primer tRNA(i)-Met annealing to the multipartite primer-binding site (PBS), dimerization of Ty1 RNA and initiation of reverse transcription. Functionally, the aspartyl protease (PR) mediates the proteolytic cleavages of the Gag and Gag-Pol polyproteins after assembly of the VLP. Reverse transcriptase/ribonuclease H (RT) is a multifunctional enzyme that catalyzes the conversion of the retro-elements RNA genome into dsDNA within the VLP. The enzyme displays a DNA polymerase activity that can copy either DNA or RNA templates, and a ribonuclease H (RNase H) activity that cleaves the RNA strand of RNA-DNA heteroduplexes during plus-strand synthesis and hydrolyzes RNA primers. The conversion leads to a linear dsDNA copy of the retrotransposon that includes long terminal repeats (LTRs) at both ends. In terms of biological role, integrase (IN) targets the VLP to the nucleus, where a subparticle preintegration complex (PIC) containing at least integrase and the newly synthesized dsDNA copy of the retrotransposon must transit the nuclear membrane. Once in the nucleus, integrase performs the integration of the dsDNA into the host genome. In Saccharomyces cerevisiae (strain ATCC 204508 / S288c) (Baker's yeast), this protein is Transposon Ty1-BL Gag-Pol polyprotein (TY1B-BL).